The following is a 90-amino-acid chain: Acylphosphatase (90 aa).

An Acylphosphatase-like domain is found at 5–90 (SYLFNVKGKV…WQELTDFKMY (86 aa)). Catalysis depends on residues arginine 20 and asparagine 38.

This sequence belongs to the acylphosphatase family.

It catalyses the reaction an acyl phosphate + H2O = a carboxylate + phosphate + H(+). The protein is Acylphosphatase (acyP) of Aliivibrio fischeri (strain ATCC 700601 / ES114) (Vibrio fischeri).